Here is a 1657-residue protein sequence, read N- to C-terminus: Alsin (1657 aa).

RCC1 repeat units lie at residues 60-109, 110-168, and 169-219; these read GEVY…VTDN, GVAY…LSIS, and REIW…LVQC. The tract at residues 432–481 is disordered; the sequence is TGAQAGSSAIGPEGLKDSREEQVKQESMQGKKSSSLVDIREEETEGGSRR. The segment covering 445-455 has biased composition (basic and acidic residues); the sequence is GLKDSREEQVK. A compositionally biased stretch (polar residues) spans 456 to 467; that stretch reads QESMQGKKSSSL. 4 positions are modified to phosphoserine: S465, S466, S483, and S492. T510 carries the phosphothreonine modification. 2 RCC1 repeats span residues 526–577 and 578–628; these read TEVW…LTAK and SQVY…LVDT. Position 533 is an N6-acetyllysine (K533). The DH domain maps to 690-885; that stretch reads GYIASLHELA…ECLALHLGRK (196 aa). The PH domain maps to 901 to 1007; it reads GKMTDSLRKP…RAISQAVDQA (107 aa). MORN repeat units follow at residues 1049–1071, 1072–1094, 1100–1122, 1123–1145, 1151–1173, 1175–1197, 1198–1220, and 1221–1244; these read YDGR…DGKM, YSGM…NKAM, YVGH…SGEV, FEGC…KLTS, FIGQ…TRGE, YMGM…FGLY, YEGN…DDTI, and YEGE…NGDY. The residue at position 1335 (S1335) is a Phosphoserine. Residues 1513–1657 form the VPS9 domain; that stretch reads KQPDIALLGF…YYQIQREKLN (145 aa).

Forms a heteromeric complex with ALS2CL. Interacts with ALS2CL.

Its function is as follows. May act as a GTPase regulator. Controls survival and growth of spinal motoneurons. The chain is Alsin (ALS2) from Pan troglodytes (Chimpanzee).